Consider the following 33-residue polypeptide: uncharacterized protein (33 aa).

The disordered stretch occupies residues 1–33; it reads MGSVIKKRRKRMSKKKHRKLLRRTRVQRRKLGK.

This is an uncharacterized protein from Mycobacterium tuberculosis (strain CDC 1551 / Oshkosh).